The chain runs to 218 residues: Cytidylate kinase (218 aa).

Position 10 to 18 (10 to 18 (GPAGSGKST)) interacts with ATP.

The protein belongs to the cytidylate kinase family. Type 1 subfamily.

It is found in the cytoplasm. The catalysed reaction is CMP + ATP = CDP + ADP. The enzyme catalyses dCMP + ATP = dCDP + ADP. The chain is Cytidylate kinase from Fusobacterium nucleatum subsp. nucleatum (strain ATCC 25586 / DSM 15643 / BCRC 10681 / CIP 101130 / JCM 8532 / KCTC 2640 / LMG 13131 / VPI 4355).